The sequence spans 439 residues: Xylose isomerase (439 aa).

Residues His-101 and Asp-104 contribute to the active site. Mg(2+) contacts are provided by Glu-232, Glu-268, His-271, Asp-296, Asp-307, Asp-309, and Asp-339.

Belongs to the xylose isomerase family. In terms of assembly, homotetramer. The cofactor is Mg(2+).

It is found in the cytoplasm. It catalyses the reaction alpha-D-xylose = alpha-D-xylulofuranose. This Pseudoalteromonas atlantica (strain T6c / ATCC BAA-1087) protein is Xylose isomerase.